Reading from the N-terminus, the 731-residue chain is DNA topoisomerase 1 (731 aa).

One can recognise a Toprim domain in the interval 17–130; that stretch reads KHLVIVESPA…KRIVFNEITP (114 aa). Positions 23 and 96 each coordinate Mg(2+). In terms of domain architecture, Topo IA-type catalytic spans 144–569; it reads DTAKVNAQKA…DFYPAFSEKV (426 aa). The tract at residues 178–183 is interaction with DNA; sequence SAGRVQ. Catalysis depends on Tyr-312, which acts as the O-(5'-phospho-DNA)-tyrosine intermediate. C4-type zinc fingers lie at residues 591–617, 628–657, and 670–696; these read CSQC…FPEC, CPRP…FPVC, and CPQC…NPEC.

Belongs to the type IA topoisomerase family. In terms of assembly, monomer. Mg(2+) is required as a cofactor.

The catalysed reaction is ATP-independent breakage of single-stranded DNA, followed by passage and rejoining.. Releases the supercoiling and torsional tension of DNA, which is introduced during the DNA replication and transcription, by transiently cleaving and rejoining one strand of the DNA duplex. Introduces a single-strand break via transesterification at a target site in duplex DNA. The scissile phosphodiester is attacked by the catalytic tyrosine of the enzyme, resulting in the formation of a DNA-(5'-phosphotyrosyl)-enzyme intermediate and the expulsion of a 3'-OH DNA strand. The free DNA strand then undergoes passage around the unbroken strand, thus removing DNA supercoils. Finally, in the religation step, the DNA 3'-OH attacks the covalent intermediate to expel the active-site tyrosine and restore the DNA phosphodiester backbone. The polypeptide is DNA topoisomerase 1 (Treponema pallidum (strain Nichols)).